Here is a 332-residue protein sequence, read N- to C-terminus: Malate dehydrogenase, cytoplasmic (332 aa).

Residues 16-17 (QI), Asp-43, and Gly-90 contribute to the NAD(+) site. Arg-99 serves as a coordination point for oxaloacetate. Residues Gln-113 and Asn-132 each coordinate NAD(+). 4 residues coordinate oxaloacetate: Asn-132, Arg-163, His-188, and Ser-243. The Proton acceptor role is filled by His-188.

The protein belongs to the LDH/MDH superfamily. MDH type 2 family. As to quaternary structure, homodimer.

Its subcellular location is the cytoplasm. It carries out the reaction (S)-malate + NAD(+) = oxaloacetate + NADH + H(+). This is Malate dehydrogenase, cytoplasmic (NR1) from Beta vulgaris (Sugar beet).